The following is a 417-amino-acid chain: Serine hydroxymethyltransferase (417 aa).

Residues L121 and 125–127 (GHL) each bind (6S)-5,6,7,8-tetrahydrofolate. Residue K229 is modified to N6-(pyridoxal phosphate)lysine. (6S)-5,6,7,8-tetrahydrofolate is bound at residue 355–357 (SPF).

It belongs to the SHMT family. Homodimer. It depends on pyridoxal 5'-phosphate as a cofactor.

It localises to the cytoplasm. It catalyses the reaction (6R)-5,10-methylene-5,6,7,8-tetrahydrofolate + glycine + H2O = (6S)-5,6,7,8-tetrahydrofolate + L-serine. It functions in the pathway one-carbon metabolism; tetrahydrofolate interconversion. It participates in amino-acid biosynthesis; glycine biosynthesis; glycine from L-serine: step 1/1. Catalyzes the reversible interconversion of serine and glycine with tetrahydrofolate (THF) serving as the one-carbon carrier. This reaction serves as the major source of one-carbon groups required for the biosynthesis of purines, thymidylate, methionine, and other important biomolecules. Also exhibits THF-independent aldolase activity toward beta-hydroxyamino acids, producing glycine and aldehydes, via a retro-aldol mechanism. The protein is Serine hydroxymethyltransferase of Citrobacter koseri (strain ATCC BAA-895 / CDC 4225-83 / SGSC4696).